We begin with the raw amino-acid sequence, 455 residues long: uncharacterized protein (455 aa).

N-linked (GlcNAc...) asparagine glycosylation is found at Asn-42, Asn-49, and Asn-70. The next 4 helical transmembrane spans lie at 127–147 (AILI…TWIF), 153–173 (SLLD…MFRI), 177–197 (ICAL…ITYY), and 377–397 (YKFC…EIIF). The N-linked (GlcNAc...) asparagine glycan is linked to Asn-403.

The protein localises to the membrane. This is an uncharacterized protein from Caenorhabditis elegans.